The chain runs to 193 residues: ATP-dependent Clp protease proteolytic subunit (193 aa).

S98 (nucleophile) is an active-site residue. The active site involves H123.

This sequence belongs to the peptidase S14 family. As to quaternary structure, fourteen ClpP subunits assemble into 2 heptameric rings which stack back to back to give a disk-like structure with a central cavity, resembling the structure of eukaryotic proteasomes.

It is found in the cytoplasm. The catalysed reaction is Hydrolysis of proteins to small peptides in the presence of ATP and magnesium. alpha-casein is the usual test substrate. In the absence of ATP, only oligopeptides shorter than five residues are hydrolyzed (such as succinyl-Leu-Tyr-|-NHMec, and Leu-Tyr-Leu-|-Tyr-Trp, in which cleavage of the -Tyr-|-Leu- and -Tyr-|-Trp bonds also occurs).. Functionally, cleaves peptides in various proteins in a process that requires ATP hydrolysis. Has a chymotrypsin-like activity. Plays a major role in the degradation of misfolded proteins. This is ATP-dependent Clp protease proteolytic subunit from Haemophilus influenzae (strain 86-028NP).